The sequence spans 354 residues: Gibberellin receptor GID1 (354 aa).

Positions 120–122 (HGG) match the Involved in the stabilization of the negatively charged intermediate by the formation of the oxyanion hole motif. Residues 122 to 123 (GS), Tyr-134, Ser-198, and Asp-250 each bind gibberellin A3. Residues 122-123 (GS), Tyr-134, and Ser-198 contribute to the gibberellin A4 site. Ser-198 is a catalytic residue. Residue Asp-296 is part of the active site. Gly-327 provides a ligand contact to gibberellin A3. Gly-327 provides a ligand contact to gibberellin A4.

Belongs to the 'GDXG' lipolytic enzyme family. Interacts with the DELLA protein SLR1 in a GA-dependent manner, resulting in subsequent SLR1 degradation.

It localises to the nucleus. In terms of biological role, functions as a soluble gibberellin (GA) receptor. GA is an essential hormone that regulates growth and development in plants. Binds with high affinity the biologically active GAs such as GA1, GA3 and GA4, but has low or no affinity for the biologically inactive GAs. Upon GA-binding, it interacts with the DELLA protein SLR1, a repressor of GA signaling. This leads to SLR1 degradation by the proteasome, allowing the GA signaling pathway. The sequence is that of Gibberellin receptor GID1 from Oryza sativa subsp. japonica (Rice).